A 501-amino-acid chain; its full sequence is Iroquois-class homeodomain protein IRX-3 (501 aa).

A DNA-binding region (homeobox; TALE-type) is located at residues 125–188 (FGDPSRPKNA…ANARRRLKKE (64 aa)). Positions 190–381 (KMTWAPRSRT…SPPGAAVAPS (192 aa)) are disordered. Acidic residues-rich tracts occupy residues 210 to 220 (REEEDEEEDEE) and 227 to 258 (ELEE…DLEN). 2 positions are modified to phosphoserine: Ser-323 and Ser-326. A compositionally biased stretch (pro residues) spans 324-339 (LPSPPVSLDPCAPAPA).

The protein belongs to the TALE/IRO homeobox family.

It is found in the nucleus. Its function is as follows. Transcription factor involved in SHH-dependent neural patterning. Together with NKX2-2 and NKX6-1 acts to restrict the generation of motor neurons to the appropriate region of the neural tube. Belongs to the class I proteins of neuronal progenitor factors, which are repressed by SHH signals. Involved in the transcriptional repression of MNX1 in non-motor neuron cells. Acts as a regulator of energy metabolism. The protein is Iroquois-class homeodomain protein IRX-3 (IRX3) of Homo sapiens (Human).